The chain runs to 528 residues: MQGPWVLLLLGLRLQLSLGVIPAEEENPAFWNRQAAEALDAAKKLQPIQKVAKNLILFLGDGLGVPTVTATRILKGQKNGKLGPETPLAMDRFPYLALSKTYNVDRQVPDSAATATAYLCGVKANFQTIGLSAAARFNQCNTTRGNEVISVMNRAKQAGKSVGVVTTTRVQHASPAGTYAHTVNRNWYSDADMPASARQEGCQDIATQLISNMDIDVILGGGRKYMFPMGTPDPEYPADASQNGIRLDGKNLVQEWLAKHQGAWYVWNRTELMQASLDQSVTHLMGLFEPGDTKYEIHRDPTLDPSLMEMTEAALRLLSRNPRGFYLFVEGGRIDHGHHEGVAYQALTEAVMFDDAIERAGQLTSEEDTLTLVTADHSHVFSFGGYTLRGSSIFGLAPSKAQDSKAYTSILYGNGPGYVFNSGVRPDVNESESGSPDYQQQAAVPLSSETHGGEDVAVFARGPQAHLVHGVQEQSFVAHVMAFAACLEPYTACDLAPPACTTDAAHPVAASLPLLAGTLLLLGASAAP.

An N-terminal signal peptide occupies residues 1–19 (MQGPWVLLLLGLRLQLSLG). Asp-61 contributes to the Mg(2+) binding site. 2 residues coordinate Zn(2+): Asp-61 and Ser-111. Ser-111 functions as the Phosphoserine intermediate in the catalytic mechanism. Cys-140 and Cys-202 are joined by a disulfide. N-linked (GlcNAc...) asparagine glycosylation is present at Asn-141. Ser-174 serves as a coordination point for Mg(2+). Ca(2+) is bound at residue Glu-235. Asn-268 carries an N-linked (GlcNAc...) asparagine glycan. Ca(2+) contacts are provided by Phe-288, Glu-289, and Asp-304. Position 330 (Glu-330) interacts with Mg(2+). Zn(2+) contacts are provided by Asp-335, His-339, Asp-376, and His-377. N-linked (GlcNAc...) asparagine glycosylation is present at Asn-429. His-451 contributes to the Zn(2+) binding site. Cysteines 486 and 493 form a disulfide. Residue Asp-503 is the site of GPI-anchor amidated aspartate attachment. Residues 504 to 528 (AAHPVAASLPLLAGTLLLLGASAAP) constitute a propeptide, removed in mature form.

The protein belongs to the alkaline phosphatase family. Homodimer. Mg(2+) is required as a cofactor. Zn(2+) serves as cofactor. Requires Ca(2+) as cofactor.

It localises to the cell membrane. It catalyses the reaction a phosphate monoester + H2O = an alcohol + phosphate. Alkaline phosphatase that can hydrolyze various phosphate compounds. The polypeptide is Intestinal-type alkaline phosphatase (ALPI) (Homo sapiens (Human)).